The primary structure comprises 263 residues: Ribosomal RNA large subunit methyltransferase E (263 aa).

G48, W50, D68, D88, and D118 together coordinate S-adenosyl-L-methionine. Catalysis depends on K158, which acts as the Proton acceptor. In terms of domain architecture, TRAM spans 205–263 (PVREGDIVEATIEDIGEEGDGIAKVENFTVFVSGVEDGETVEVRIDDVKPRYAFAEPVE).

The protein belongs to the class I-like SAM-binding methyltransferase superfamily. RNA methyltransferase RlmE family.

Its subcellular location is the cytoplasm. The enzyme catalyses uridine(2552) in 23S rRNA + S-adenosyl-L-methionine = 2'-O-methyluridine(2552) in 23S rRNA + S-adenosyl-L-homocysteine + H(+). Its function is as follows. Specifically methylates the uridine in position 2552 of 23S rRNA at the 2'-O position of the ribose in the fully assembled 50S ribosomal subunit. The sequence is that of Ribosomal RNA large subunit methyltransferase E from Haloarcula marismortui (strain ATCC 43049 / DSM 3752 / JCM 8966 / VKM B-1809) (Halobacterium marismortui).